A 115-amino-acid polypeptide reads, in one-letter code: U3-lycotoxin-Ls1l (115 aa).

An N-terminal signal peptide occupies residues Met1–Ala20. A propeptide spanning residues Glu21–Arg44 is cleaved from the precursor. Cystine bridges form between Cys55/Cys72, Cys62/Cys87, and Cys74/Cys85.

This sequence belongs to the neurotoxin 19 (CSTX) family. 01 subfamily. In terms of tissue distribution, expressed by the venom gland.

The protein resides in the secreted. This is U3-lycotoxin-Ls1l from Lycosa singoriensis (Wolf spider).